The chain runs to 418 residues: Enolase 1 (418 aa).

Gln162 lines the (2R)-2-phosphoglycerate pocket. The active-site Proton donor is Glu204. Positions 241, 285, and 312 each coordinate Mg(2+). Positions 337, 366, 367, and 388 each coordinate (2R)-2-phosphoglycerate. Residue Lys337 is the Proton acceptor of the active site.

Belongs to the enolase family. It depends on Mg(2+) as a cofactor.

Its subcellular location is the cytoplasm. The protein resides in the secreted. The protein localises to the cell surface. The enzyme catalyses (2R)-2-phosphoglycerate = phosphoenolpyruvate + H2O. The protein operates within carbohydrate degradation; glycolysis; pyruvate from D-glyceraldehyde 3-phosphate: step 4/5. Functionally, catalyzes the reversible conversion of 2-phosphoglycerate (2-PG) into phosphoenolpyruvate (PEP). It is essential for the degradation of carbohydrates via glycolysis. This is Enolase 1 from Lactococcus lactis subsp. cremoris (strain SK11).